A 94-amino-acid polypeptide reads, in one-letter code: Small ribosomal subunit protein bS6 (94 aa).

Belongs to the bacterial ribosomal protein bS6 family.

Binds together with bS18 to 16S ribosomal RNA. In Clostridium botulinum (strain 657 / Type Ba4), this protein is Small ribosomal subunit protein bS6.